We begin with the raw amino-acid sequence, 99 residues long: Cell division protein FtsB (99 aa).

Over 1 to 3 (MKF) the chain is Cytoplasmic. A helical transmembrane segment spans residues 4–21 (FVIALIVLLGLLQYRLWS). The Periplasmic portion of the chain corresponds to 22-99 (GDNSLPEYFV…GDRSVSSPSQ (78 aa)). Positions 31 to 73 (VLQKQIAAQQDGNAKLNERNQVLKEEIIDLKSGTEAIEERARN) form a coiled coil.

Belongs to the FtsB family. Part of a complex composed of FtsB, FtsL and FtsQ.

The protein resides in the cell inner membrane. Functionally, essential cell division protein. May link together the upstream cell division proteins, which are predominantly cytoplasmic, with the downstream cell division proteins, which are predominantly periplasmic. The chain is Cell division protein FtsB from Shewanella sp. (strain MR-4).